Reading from the N-terminus, the 423-residue chain is Gamma-glutamyl phosphate reductase (423 aa).

The protein belongs to the gamma-glutamyl phosphate reductase family.

The protein resides in the cytoplasm. The enzyme catalyses L-glutamate 5-semialdehyde + phosphate + NADP(+) = L-glutamyl 5-phosphate + NADPH + H(+). Its pathway is amino-acid biosynthesis; L-proline biosynthesis; L-glutamate 5-semialdehyde from L-glutamate: step 2/2. Catalyzes the NADPH-dependent reduction of L-glutamate 5-phosphate into L-glutamate 5-semialdehyde and phosphate. The product spontaneously undergoes cyclization to form 1-pyrroline-5-carboxylate. This chain is Gamma-glutamyl phosphate reductase, found in Paracoccus denitrificans (strain Pd 1222).